The following is a 379-amino-acid chain: Tryptophan--tRNA ligase, mitochondrial (379 aa).

Residues Gln-42 and 48 to 51 (HLGN) each bind ATP. Positions 43–51 (PTGCFHLGN) match the 'HIGH' region motif. Asp-184 provides a ligand contact to L-tryptophan. ATP is bound by residues 196-198 (GDD), Val-235, 244-248 (KMSKS), and Lys-247. The short motif at 244-248 (KMSKS) is the 'KMSKS' region element.

The protein belongs to the class-I aminoacyl-tRNA synthetase family. Homodimer.

Its subcellular location is the mitochondrion matrix. It carries out the reaction tRNA(Trp) + L-tryptophan + ATP = L-tryptophyl-tRNA(Trp) + AMP + diphosphate + H(+). Mitochondrial aminoacyl-tRNA synthetase that catalyzes the attachment of tryptophan to tRNA(Trp). This Saccharomyces cerevisiae (strain ATCC 204508 / S288c) (Baker's yeast) protein is Tryptophan--tRNA ligase, mitochondrial (MSW1).